The primary structure comprises 271 residues: Mitochondrial distribution and morphology protein 12 (271 aa).

The SMP-LTD domain maps to 1–267 (MSFDINWSTL…WPSWINLDFN (267 aa)). Residue Lys-49 forms a Glycyl lysine isopeptide (Lys-Gly) (interchain with G-Cter in ubiquitin) linkage.

It belongs to the MDM12 family. In terms of assembly, component of the ER-mitochondria encounter structure (ERMES) or MDM complex, composed of MMM1, MDM10, MDM12 and MDM34. An MMM1 homodimer associates with one molecule of MDM12 on each side in a pairwise head-to-tail manner, and the SMP-LTD domains of MMM1 and MDM12 generate a continuous hydrophobic tunnel for phospholipid trafficking. Interacts with PUF3.

Its subcellular location is the mitochondrion outer membrane. The protein localises to the endoplasmic reticulum membrane. Component of the ERMES/MDM complex, which serves as a molecular tether to connect the endoplasmic reticulum (ER) and mitochondria. Components of this complex are involved in the control of mitochondrial shape and protein biogenesis, and function in nonvesicular lipid trafficking between the ER and mitochondria. MDM12 is required for the interaction of the ER-resident membrane protein MMM1 and the outer mitochondrial membrane-resident beta-barrel protein MDM10. The MDM12-MMM1 subcomplex functions in the major beta-barrel assembly pathway that is responsible for biogenesis of all mitochondrial outer membrane beta-barrel proteins, and acts in a late step after the SAM complex. The MDM10-MDM12-MMM1 subcomplex further acts in the TOM40-specific pathway after the action of the MDM12-MMM1 complex. Essential for establishing and maintaining the structure of mitochondria and maintenance of mtDNA nucleoids. This Saccharomyces cerevisiae (strain AWRI1631) (Baker's yeast) protein is Mitochondrial distribution and morphology protein 12.